Consider the following 425-residue polypeptide: GTPase Obg (425 aa).

Residues 1 to 158 (MFVDVARIYV…RWLLLELKVV (158 aa)) form the Obg domain. The region spanning 159–330 (ADVGLVGFPN…LLEAAYDLIR (172 aa)) is the OBG-type G domain. GTP is bound by residues 165-172 (GFPNAGKS), 190-194 (FTTLT), 212-215 (DIPG), 282-285 (NKMD), and 311-313 (SGA). The Mg(2+) site is built by Ser-172 and Thr-192. An OCT domain is found at 345 to 422 (VYRPKEEGWR…VCDIEFELMA (78 aa)).

The protein belongs to the TRAFAC class OBG-HflX-like GTPase superfamily. OBG GTPase family. Monomer. The cofactor is Mg(2+).

The protein localises to the cytoplasm. In terms of biological role, an essential GTPase which binds GTP, GDP and possibly (p)ppGpp with moderate affinity, with high nucleotide exchange rates and a fairly low GTP hydrolysis rate. Plays a role in control of the cell cycle, stress response, ribosome biogenesis and in those bacteria that undergo differentiation, in morphogenesis control. The polypeptide is GTPase Obg (Symbiobacterium thermophilum (strain DSM 24528 / JCM 14929 / IAM 14863 / T)).